Here is a 345-residue protein sequence, read N- to C-terminus: NADPH dehydrogenase (345 aa).

An FMN-binding site is contributed by 23-26 (SPMC). Tyr28 contacts substrate. Residues Ala60 and Gln102 each coordinate FMN. Residue 164–167 (HGAH) coordinates substrate. Residues Arg215 and 307 to 308 (GR) contribute to the FMN site.

This sequence belongs to the NADH:flavin oxidoreductase/NADH oxidase family. NamA subfamily. As to quaternary structure, homotetramer. The cofactor is FMN.

The enzyme catalyses A + NADPH + H(+) = AH2 + NADP(+). Functionally, catalyzes the reduction of the double bond of an array of alpha,beta-unsaturated aldehydes and ketones. It also reduces the nitro group of nitroester and nitroaromatic compounds. It could have a role in detoxification processes. The polypeptide is NADPH dehydrogenase (Bacillus cereus (strain Q1)).